A 372-amino-acid chain; its full sequence is Alanine racemase (372 aa).

The active-site Proton acceptor; specific for D-alanine is lysine 33. Lysine 33 carries the post-translational modification N6-(pyridoxal phosphate)lysine. Arginine 131 contacts substrate. Tyrosine 261 (proton acceptor; specific for L-alanine) is an active-site residue. Residue methionine 309 coordinates substrate.

It belongs to the alanine racemase family. Pyridoxal 5'-phosphate is required as a cofactor.

The catalysed reaction is L-alanine = D-alanine. The protein operates within amino-acid biosynthesis; D-alanine biosynthesis; D-alanine from L-alanine: step 1/1. In terms of biological role, catalyzes the interconversion of L-alanine and D-alanine. May also act on other amino acids. This is Alanine racemase (alr) from Salinispora arenicola (strain CNS-205).